The chain runs to 570 residues: Polypeptide N-acetylgalactosaminyltransferase 2 (570 aa).

The Cytoplasmic portion of the chain corresponds to 1–6 (MRRRSR). A helical; Signal-anchor for type II membrane protein membrane pass occupies residues 7-24 (MLLCFALLWVLGIAYYMY). The Lumenal portion of the chain corresponds to 25–570 (SGGGSALAAG…QWKFSLNLQQ (546 aa)). O-linked (Xyl...) (chondroitin sulfate) serine glycosylation is present at Ser29. 4 cysteine pairs are disulfide-bonded: Cys125-Cys353, Cys344-Cys422, Cys455-Cys472, and Cys495-Cys512. Residues 134–239 (LPATSVVITF…ERWLEPLLER (106 aa)) form a catalytic subdomain A region. Substrate contacts are provided by Thr142, Asp175, and Arg200. Position 223 (Asp223) interacts with Mn(2+). Ser224 is a binding site for substrate. A Mn(2+)-binding site is contributed by His225. The tract at residues 299 to 361 (PIKTPMIAGG…PCSRVGHVFR (63 aa)) is catalytic subdomain B. Trp330 is a substrate binding site. His358 provides a ligand contact to Mn(2+). Positions 361, 364, and 366 each coordinate substrate. In terms of domain architecture, Ricin B-type lectin spans 442–565 (QDIAFGALQQ…PALSQQWKFS (124 aa)). The N-linked (GlcNAc...) asparagine glycan is linked to Asn515. Ser535 carries the post-translational modification Phosphoserine. An intrachain disulfide couples Cys538 to Cys554.

Belongs to the glycosyltransferase 2 family. GalNAc-T subfamily. Mn(2+) is required as a cofactor. In terms of tissue distribution, widely expressed at high level.

It is found in the golgi apparatus. The protein resides in the golgi stack membrane. Its subcellular location is the secreted. The enzyme catalyses L-seryl-[protein] + UDP-N-acetyl-alpha-D-galactosamine = a 3-O-[N-acetyl-alpha-D-galactosaminyl]-L-seryl-[protein] + UDP + H(+). It carries out the reaction L-threonyl-[protein] + UDP-N-acetyl-alpha-D-galactosamine = a 3-O-[N-acetyl-alpha-D-galactosaminyl]-L-threonyl-[protein] + UDP + H(+). Its pathway is protein modification; protein glycosylation. Functionally, catalyzes the initial reaction in O-linked oligosaccharide biosynthesis, the transfer of an N-acetyl-D-galactosamine residue to a serine or threonine residue on the protein receptor. Has a broad spectrum of substrates for peptides such as EA2, Muc5AC, Muc1a, Muc1b. Probably involved in O-linked glycosylation of the immunoglobulin A1 (IgA1) hinge region. Involved in O-linked glycosylation of APOC-III, ANGPTL3 and PLTP. It participates in the regulation of HDL-C metabolism. This is Polypeptide N-acetylgalactosaminyltransferase 2 (Galnt2) from Mus musculus (Mouse).